Reading from the N-terminus, the 514-residue chain is MSVSKKPMVLVILDGYGYREEQQDNAIFSAKTPVMDALWANRPHTLIDASGLEVGLPDRQMGNSEVGHVNLGAGRIVYQDLTRLDVEIKDRAFFANPVLAGAVHKAKNAGKAVHIMGLLSAGGVHSHEDHIMAMVELAAERGAEKIYLHAFLDGRDTPPRSAESSLKKFEEKFAALGKGRVASIIGRYYAMDRDNRWDRVEKAYDLLTLAQGEFQADTAVAGLQAAYARDENDEFVKATVIRAEGQPDAAMEDGDALIFMNFRADRAREITRAFVNADFDGFARKKVVNVDFVMLTEYAADIKTAVAYPPASLVNTFGEWMAKNDKTQLRISETEKYAHVTFFFNGGVEESFKGEDRILINSPKVATYDLQPEMSSAELTEKLVAAIKSGKYDTIICNYPNGDMVGHTGVMEAAVKAVEALDHCVEEVAKAVESVGGQLLITADHGNAEQMRDPATGQAHTAHTNLPVPLIYVGDKNVKAVAGGKLSDIAPTMLSLMGMEIPQEMTGKPLFIVE.

Mn(2+)-binding residues include D14 and S64. Catalysis depends on S64, which acts as the Phosphoserine intermediate. Substrate contacts are provided by residues H125, 155-156 (RD), R187, R193, 263-266 (RADR), and K336. D403, H407, D444, H445, and H463 together coordinate Mn(2+).

Belongs to the BPG-independent phosphoglycerate mutase family. Monomer. Mn(2+) serves as cofactor.

It carries out the reaction (2R)-2-phosphoglycerate = (2R)-3-phosphoglycerate. It participates in carbohydrate degradation; glycolysis; pyruvate from D-glyceraldehyde 3-phosphate: step 3/5. Functionally, catalyzes the interconversion of 2-phosphoglycerate and 3-phosphoglycerate. This is 2,3-bisphosphoglycerate-independent phosphoglycerate mutase from Shigella flexneri.